Reading from the N-terminus, the 316-residue chain is Beta-ketoacyl-[acyl-carrier-protein] synthase III (316 aa).

Residues C112 and H243 contribute to the active site. An ACP-binding region spans residues 244–248 (QANLR). N273 is a catalytic residue.

It belongs to the thiolase-like superfamily. FabH family. In terms of assembly, homodimer.

It localises to the cytoplasm. It carries out the reaction malonyl-[ACP] + acetyl-CoA + H(+) = 3-oxobutanoyl-[ACP] + CO2 + CoA. It functions in the pathway lipid metabolism; fatty acid biosynthesis. Catalyzes the condensation reaction of fatty acid synthesis by the addition to an acyl acceptor of two carbons from malonyl-ACP. Catalyzes the first condensation reaction which initiates fatty acid synthesis and may therefore play a role in governing the total rate of fatty acid production. Possesses both acetoacetyl-ACP synthase and acetyl transacylase activities. Its substrate specificity determines the biosynthesis of branched-chain and/or straight-chain of fatty acids. The sequence is that of Beta-ketoacyl-[acyl-carrier-protein] synthase III from Histophilus somni (strain 2336) (Haemophilus somnus).